A 334-amino-acid polypeptide reads, in one-letter code: uncharacterized protein (334 aa).

It belongs to the MG414/MG415 family.

This is an uncharacterized protein from Mycoplasma pneumoniae (strain ATCC 29342 / M129 / Subtype 1) (Mycoplasmoides pneumoniae).